Here is a 73-residue protein sequence, read N- to C-terminus: MTTQNELLNRIAELETKVAFQDNVIEELNQVLIHHQFVLDKLQTQVRHFANKFKNIQSSNVASQAEETPPPHY.

This sequence belongs to the SlyX family.

The polypeptide is Protein SlyX homolog (Haemophilus ducreyi (strain 35000HP / ATCC 700724)).